A 293-amino-acid polypeptide reads, in one-letter code: MSFEHPGDGDSRYYLLKIAHEQFGCAPGELSEEQLQQAERIIGRQKHIEDAVLRCPDAAGVVIPASQIEEAWTQIANRYESAEALQQALDAQGLERVGMRAMLARELKVQAVLDCICAGLPEISDTDVSLYYFNHAEQFKVPARHKARHILVTINEDFPENTREAARTRIEAILKRLRGKPERFAEQAAKHSECPTAMQGGLLGEVVPGTLYPELDACLFQMAQGQLSPVLESPIGFHVLFCESVSTARQLTLEEILPRLRDRLQLRQRKAYQRKWLESLLQQNATLENLAHG.

The PpiC domain occupies 142–244 (PARHKARHIL…IGFHVLFCES (103 aa)).

The protein belongs to the PpiC/parvulin rotamase family.

The enzyme catalyses [protein]-peptidylproline (omega=180) = [protein]-peptidylproline (omega=0). Required for the activation and stabilization of the iron-component (NifH) of nitrogenase. Probable PPIase. The polypeptide is Putative peptidyl-prolyl cis-trans isomerase NifM (nifM) (Azotobacter chroococcum mcd 1).